The primary structure comprises 339 residues: Diguanylate cyclase VdcA (339 aa).

The 134-residue stretch at 206–339 (QQVSLIMLDI…NLGRNRVMPL (134 aa)) folds into the GGDEF domain. A Mg(2+)-binding site is contributed by Asp214. Asn222 and Asp231 together coordinate substrate. Glu257 serves as a coordination point for Mg(2+). Catalysis depends on Glu257, which acts as the Proton acceptor.

It depends on Mg(2+) as a cofactor.

It catalyses the reaction 2 GTP = 3',3'-c-di-GMP + 2 diphosphate. The protein operates within purine metabolism; 3',5'-cyclic di-GMP biosynthesis. Its function is as follows. Diguanylate cyclase (DGC) that catalyzes the synthesis of cyclic diguanylate (c-di-GMP) via the condensation of 2 GTP molecules. Is involved in the modulation of intracellular c-di-GMP levels. Cyclic-di-GMP is a second messenger which positively regulates biofilm formation and negatively regulates virulence in V.cholerae, and is proposed to play an important role in the transition from persistence in the environment to survival in the host. Overexpression of vdcA results in increased biofilm formation, and reduced motility and virulence. This Vibrio cholerae serotype O1 (strain ATCC 39315 / El Tor Inaba N16961) protein is Diguanylate cyclase VdcA (vdcA).